A 96-amino-acid polypeptide reads, in one-letter code: uncharacterized protein (96 aa).

Positions 1–19 (MKFLSALLLIVLLISVVFG) are cleaved as a signal peptide. An N-linked (GlcNAc...) asparagine glycan is attached at Asn-20. Residues 27–46 (AWATTTTGGTTGSQTSPATH) show a composition bias toward low complexity. A disordered region spans residues 27–58 (AWATTTTGGTTGSQTSPATHGGHGGNGGNGHS). Residues 47–56 (GGHGGNGGNG) show a composition bias toward gly residues.

The protein resides in the secreted. This is an uncharacterized protein from Dictyostelium discoideum (Social amoeba).